Reading from the N-terminus, the 287-residue chain is Homoserine kinase (287 aa).

Position 78 to 88 (78 to 88 (PLSRGLGSSST)) interacts with ATP.

The protein belongs to the GHMP kinase family. Homoserine kinase subfamily.

The protein localises to the cytoplasm. It carries out the reaction L-homoserine + ATP = O-phospho-L-homoserine + ADP + H(+). It functions in the pathway amino-acid biosynthesis; L-threonine biosynthesis; L-threonine from L-aspartate: step 4/5. Catalyzes the ATP-dependent phosphorylation of L-homoserine to L-homoserine phosphate. This Lactobacillus gasseri (strain ATCC 33323 / DSM 20243 / BCRC 14619 / CIP 102991 / JCM 1131 / KCTC 3163 / NCIMB 11718 / NCTC 13722 / AM63) protein is Homoserine kinase.